The following is a 691-amino-acid chain: Calcium-binding and coiled-coil domain-containing protein 1 (691 aa).

A p300 KIX-binding region spans residues 1–30 (MEESSLSRAPSRGGVNFLNVARTYIPNTKV). The N-terminal AD (CTNNB1 binding site) stretch occupies residues 1-190 (MEESSLSRAP…VQELEAALAT (190 aa)). Ser-4 bears the Phosphoserine mark. Residues 45 to 125 (SDWIGIFKVE…FQFREPRPMD (81 aa)) form an interaction with GATA1 region. Coiled coils occupy residues 145–205 (KATV…YKGL), 232–339 (ELED…AELE), and 417–514 (QSME…ADEK). The segment at 501–691 (RKLEARLEKV…FSTQDPFTFE (191 aa)) is C-terminal AD (CTNNB1 binding site); interaction with CCAR1. The segment at 512–605 (DEKWTEDAAT…DSEAEDEKSV (94 aa)) is disordered. The UBZ1-type zinc-finger motif lies at 653 to 679 (WKECPICKERFPAESDKDALEGHMDGH). Cys-656, Cys-659, His-675, and His-679 together coordinate Zn(2+).

Belongs to the CALCOCO family. As to quaternary structure, part of a calphoglin complex consisting of CALCOCO1, PPA1 and PGM. Interacts with the bHLH-PAS domains of GRIP1, AHR and ARNT. Interacts with CTNNB1 via both its N- and C-terminal regions. Interacts with EP300. Interacts with CCAR1 (via N-terminus) and GATA1. Expressed in all tissues examined except spleen, with high levels of expression in the heart and kidney.

The protein localises to the cytoplasm. The protein resides in the nucleus. In terms of biological role, functions as a coactivator for aryl hydrocarbon and nuclear receptors (NR). Recruited to promoters through its contact with the N-terminal basic helix-loop-helix-Per-Arnt-Sim (PAS) domain of transcription factors or coactivators, such as NCOA2. During ER-activation acts synergistically in combination with other NCOA2-binding proteins, such as EP300, CREBBP and CARM1. Involved in the transcriptional activation of target genes in the Wnt/CTNNB1 pathway. Functions as a secondary coactivator in LEF1-mediated transcriptional activation via its interaction with CTNNB1. Coactivator function for nuclear receptors and LEF1/CTNNB1 involves differential utilization of two different activation regions. In association with CCAR1 enhances GATA1- and MED1-mediated transcriptional activation from the gamma-globin promoter during erythroid differentiation of K562 erythroleukemia cells. This Mus musculus (Mouse) protein is Calcium-binding and coiled-coil domain-containing protein 1 (Calcoco1).